A 79-amino-acid polypeptide reads, in one-letter code: UPF0180 protein BCAH187_A1552 (79 aa).

The protein belongs to the UPF0180 family.

In Bacillus cereus (strain AH187), this protein is UPF0180 protein BCAH187_A1552.